Reading from the N-terminus, the 47-residue chain is MWRMWKILDYRRTVVLAHVGMAVLALLIHFILLSTESFNWLEGNPYG.

The Cytoplasmic portion of the chain corresponds to 1–12 (MWRMWKILDYRR). Residues 13 to 33 (TVVLAHVGMAVLALLIHFILL) traverse the membrane as a helical segment. Position 29 (His29) interacts with a bacteriochlorophyll. Topologically, residues 34-47 (STESFNWLEGNPYG) are periplasmic.

The protein belongs to the antenna complex alpha subunit family. In terms of assembly, the core complex is formed by different alpha and beta chains, binding bacteriochlorophyll molecules, and arranged most probably in tetrameric structures disposed around the reaction center. The non-pigmented gamma chains may constitute additional components.

It is found in the cell inner membrane. Antenna complexes are light-harvesting systems, which transfer the excitation energy to the reaction centers. The chain is Light-harvesting protein B800/850/890 alpha-2 chain from Halorhodospira halophila (strain DSM 244 / SL1) (Ectothiorhodospira halophila (strain DSM 244 / SL1)).